The following is a 346-amino-acid chain: Methylthioribose-1-phosphate isomerase (346 aa).

Substrate-binding positions include 46 to 48 (RGA), arginine 89, and glutamine 196. The Proton donor role is filled by aspartate 237. Residue 247–248 (NK) participates in substrate binding.

Belongs to the eIF-2B alpha/beta/delta subunits family. MtnA subfamily.

It carries out the reaction 5-(methylsulfanyl)-alpha-D-ribose 1-phosphate = 5-(methylsulfanyl)-D-ribulose 1-phosphate. The protein operates within amino-acid biosynthesis; L-methionine biosynthesis via salvage pathway; L-methionine from S-methyl-5-thio-alpha-D-ribose 1-phosphate: step 1/6. Catalyzes the interconversion of methylthioribose-1-phosphate (MTR-1-P) into methylthioribulose-1-phosphate (MTRu-1-P). The sequence is that of Methylthioribose-1-phosphate isomerase from Geotalea uraniireducens (strain Rf4) (Geobacter uraniireducens).